A 957-amino-acid chain; its full sequence is Dystrophin-related protein 2 (957 aa).

Spectrin repeat units lie at residues 102–179 (DLSG…EELE) and 231–337 (EHLL…QLQD). The region spanning 358–383 (WERAISPNKVPYYINHQAQTTCWDHP) is the WW domain. Residues 605 to 661 (KHQTKCSICRQCPIKGFRYRSLKQFNVDICQTCFLTGRASKGNKLHYPIMEYYTPTT) form a ZZ-type; degenerate zinc finger. Cys610, Cys613, Cys634, and Cys637 together coordinate Zn(2+). Ser748 carries the phosphoserine modification. Low complexity predominate over residues 876–894 (QPPSESDGNGSAGSSLASS). The segment at 876–923 (QPPSESDGNGSAGSSLASSPRQSEGSHPREKGQTTPDTEVADDVGSKS) is disordered. Thr910 is subject to Phosphothreonine.

Interacts with PRX; this enhances phosphorylation. Identified in a dystroglycan complex that contains at least PRX, DRP2, UTRN, DMD and DAG1. Detected in quadriceps nerve Schwann cells. Detected in sciatic nerve. Detected in trigeminal nerve Schwann cells (at protein level). Detected in brain and spinal cord.

It localises to the postsynaptic density. Its subcellular location is the cell projection. The protein resides in the dendrite. The protein localises to the perikaryon. It is found in the cell membrane. Required for normal myelination and for normal organization of the cytoplasm and the formation of Cajal bands in myelinating Schwann cells. Required for normal PRX location at appositions between the abaxonal surface of the myelin sheath and the Schwann cell plasma membrane. Possibly involved in membrane-cytoskeleton interactions of the central nervous system. This Mus musculus (Mouse) protein is Dystrophin-related protein 2 (Drp2).